The sequence spans 138 residues: Large ribosomal subunit protein uL16 (138 aa).

Positions 1-29 (MSLLQPRKVKWRKPQKGRTKGKATRRNQV) are disordered. Basic residues predominate over residues 7–25 (RKVKWRKPQKGRTKGKATR).

The protein belongs to the universal ribosomal protein uL16 family. As to quaternary structure, part of the 50S ribosomal subunit.

Its function is as follows. Binds 23S rRNA and is also seen to make contacts with the A and possibly P site tRNAs. The chain is Large ribosomal subunit protein uL16 from Sulfurihydrogenibium sp. (strain YO3AOP1).